Reading from the N-terminus, the 273-residue chain is Putative pyruvate, phosphate dikinase regulatory protein (273 aa).

149–156 (GPSRTSKT) contacts ADP.

The protein belongs to the pyruvate, phosphate/water dikinase regulatory protein family. PDRP subfamily.

It catalyses the reaction N(tele)-phospho-L-histidyl/L-threonyl-[pyruvate, phosphate dikinase] + ADP = N(tele)-phospho-L-histidyl/O-phospho-L-threonyl-[pyruvate, phosphate dikinase] + AMP + H(+). The catalysed reaction is N(tele)-phospho-L-histidyl/O-phospho-L-threonyl-[pyruvate, phosphate dikinase] + phosphate + H(+) = N(tele)-phospho-L-histidyl/L-threonyl-[pyruvate, phosphate dikinase] + diphosphate. In terms of biological role, bifunctional serine/threonine kinase and phosphorylase involved in the regulation of the pyruvate, phosphate dikinase (PPDK) by catalyzing its phosphorylation/dephosphorylation. This chain is Putative pyruvate, phosphate dikinase regulatory protein, found in Rickettsia massiliae (strain Mtu5).